The sequence spans 217 residues: Octanoyltransferase (217 aa).

Positions 32–207 (SDSPDELWIV…TLSQLLGYQQ (176 aa)) constitute a BPL/LPL catalytic domain. Substrate is bound by residues 71-78 (RGGQVTYH), 138-140 (SLG), and 151-153 (GLA). Cys-169 acts as the Acyl-thioester intermediate in catalysis.

Belongs to the LipB family.

The protein resides in the cytoplasm. It catalyses the reaction octanoyl-[ACP] + L-lysyl-[protein] = N(6)-octanoyl-L-lysyl-[protein] + holo-[ACP] + H(+). The protein operates within protein modification; protein lipoylation via endogenous pathway; protein N(6)-(lipoyl)lysine from octanoyl-[acyl-carrier-protein]: step 1/2. In terms of biological role, catalyzes the transfer of endogenously produced octanoic acid from octanoyl-acyl-carrier-protein onto the lipoyl domains of lipoate-dependent enzymes. Lipoyl-ACP can also act as a substrate although octanoyl-ACP is likely to be the physiological substrate. The polypeptide is Octanoyltransferase (Shewanella sp. (strain MR-7)).